The chain runs to 257 residues: Type III pantothenate kinase (257 aa).

ATP is bound at residue 6 to 13 (DCGNTNTV). Residue 107–110 (GPDR) participates in substrate binding. Aspartate 109 functions as the Proton acceptor in the catalytic mechanism. Position 129 (aspartate 129) interacts with K(+). Threonine 132 is an ATP binding site. Threonine 184 provides a ligand contact to substrate.

Belongs to the type III pantothenate kinase family. In terms of assembly, homodimer. NH4(+) serves as cofactor. K(+) is required as a cofactor.

It localises to the cytoplasm. It catalyses the reaction (R)-pantothenate + ATP = (R)-4'-phosphopantothenate + ADP + H(+). It participates in cofactor biosynthesis; coenzyme A biosynthesis; CoA from (R)-pantothenate: step 1/5. Catalyzes the phosphorylation of pantothenate (Pan), the first step in CoA biosynthesis. The chain is Type III pantothenate kinase from Roseobacter denitrificans (strain ATCC 33942 / OCh 114) (Erythrobacter sp. (strain OCh 114)).